A 1047-amino-acid chain; its full sequence is Helicase-like transcription factor CHR27 (1047 aa).

The segment covering 1-11 has biased composition (low complexity); sequence MDSAIEISSGS. Disordered stretches follow at residues 1-89, 103-130, and 145-174; these read MDSA…SGSG, RTLP…SGSR, and KRTL…GSRF. 2 stretches are compositionally biased toward polar residues: residues 52–88 and 118–128; these read TNQA…SSGS and SGTNNISNASG. In terms of domain architecture, Helicase ATP-binding spans 296-597; the sequence is ETSSFNCPGG…YSYFRFLRYD (302 aa). An ATP-binding site is contributed by 309-316; that stretch reads DDQGLGKT. Disordered stretches follow at residues 349–407 and 511–533; these read ADDE…TRAF and VGAS…SEPD. The span at 354–368 shows a compositional bias: basic and acidic residues; it reads DNAKHESGSHVKPEL. A compositionally biased stretch (polar residues) spans 370–379; it reads VSSNSETSVL. A compositionally biased stretch (acidic residues) spans 385–400; the sequence is DENDSSDMEKAEDEEA. Residues 511–523 show a composition bias toward basic residues; it reads VGASKKSKRRGRK. The RING-type; degenerate zinc finger occupies 751–790; that stretch reads CYECNEPPEKPVVTLCGHIFCYECVLEYITGDENTCPVPR. Residues 851-868 show a composition bias toward polar residues; sequence QPDSPNSAQHGQMPSSSR. Residues 851-873 form a disordered region; that stretch reads QPDSPNSAQHGQMPSSSRPYDDD. The Helicase C-terminal domain occupies 887 to 1042; that stretch reads SPSQGAVKTI…ATRLTVDDLK (156 aa).

This sequence belongs to the SNF2/RAD54 helicase family. RAD16 subfamily. Interacts with SUVR2. Interacts with itself.

The protein localises to the nucleus. Functionally, probable helicase-like transcription factor involved in transcriptional gene silencing. Associates with SUVR2 and contributes to transcriptional gene silencing at RNA-directed DNA methylation (RdDM) target loci but also at RdDM-independent target loci. May be involved in nucleosome positioning to form ordered nucleosome arrays on chromatin. Associates with SUVR2 and functions redundantly with FRG2. Required for the efficient methylation of a broad range of RdDM target loci. The protein is Helicase-like transcription factor CHR27 of Arabidopsis thaliana (Mouse-ear cress).